The sequence spans 232 residues: Phosphoglycolate phosphatase (232 aa).

D13 (nucleophile) is an active-site residue. Positions 13, 15, and 175 each coordinate Mg(2+).

This sequence belongs to the HAD-like hydrolase superfamily. CbbY/CbbZ/Gph/YieH family. In terms of assembly, monomer. Mg(2+) serves as cofactor. Chloride is required as a cofactor.

The catalysed reaction is 2-phosphoglycolate + H2O = glycolate + phosphate. Its pathway is organic acid metabolism; glycolate biosynthesis; glycolate from 2-phosphoglycolate: step 1/1. Its function is as follows. Specifically catalyzes the dephosphorylation of 2-phosphoglycolate. Is involved in the dissimilation of the intracellular 2-phosphoglycolate formed during the DNA repair of 3'-phosphoglycolate ends, a major class of DNA lesions induced by oxidative stress. This Yersinia pseudotuberculosis serotype I (strain IP32953) protein is Phosphoglycolate phosphatase.